The following is a 105-amino-acid chain: MALWTRLRPLLALLALWPPPPARAFVNQHLCGSHLVEALYLVCGERGFFYTPKARREVEGPQVGALELAGGPGAGGLEGPPQKRGIVEQCCASVCSLYQLENYCN.

An N-terminal signal peptide occupies residues 1-24 (MALWTRLRPLLALLALWPPPPARA). Disulfide bonds link Cys-31/Cys-91, Cys-43/Cys-104, and Cys-90/Cys-95. A propeptide spans 57–82 (EVEGPQVGALELAGGPGAGGLEGPPQ) (c peptide).

The protein belongs to the insulin family. As to quaternary structure, heterodimer of a B chain and an A chain linked by two disulfide bonds.

It localises to the secreted. Functionally, insulin decreases blood glucose concentration. It increases cell permeability to monosaccharides, amino acids and fatty acids. It accelerates glycolysis, the pentose phosphate cycle, and glycogen synthesis in liver. This chain is Insulin (INS), found in Bos taurus (Bovine).